We begin with the raw amino-acid sequence, 446 residues long: Glutamine synthetase (446 aa).

The GS beta-grasp domain maps to 18–103; sequence ENVRYLRLQF…LICDVYKTDG (86 aa). Positions 110-446 constitute a GS catalytic domain; the sequence is PRANLKRVLK…WERDQYMKQY (337 aa). Residues glutamate 134 and glutamate 136 each contribute to the Mg(2+) site. Position 186 (glutamate 186) interacts with ATP. Mg(2+)-binding residues include glutamate 191 and glutamate 198. Residues 242 to 243 and glycine 243 each bind L-glutamate; that span reads NG. Residue histidine 247 participates in Mg(2+) binding. Serine 251 serves as a coordination point for ATP. 3 residues coordinate L-glutamate: arginine 300, glutamate 306, and arginine 318. Residues arginine 318 and arginine 323 each contribute to the ATP site. A Mg(2+)-binding site is contributed by glutamate 335. Arginine 337 lines the L-glutamate pocket.

It belongs to the glutamine synthetase family. Oligomer of 12 subunits arranged in the form of two hexagons. In its feedback-inhibited form, interacts with TnrA in order to block its DNA-binding activity. Mg(2+) is required as a cofactor.

The protein localises to the cytoplasm. It catalyses the reaction L-glutamate + NH4(+) + ATP = L-glutamine + ADP + phosphate + H(+). Its activity is regulated as follows. Inhibited by glutamine. In terms of biological role, glutamine synthetase (GS) is an unusual multitasking protein that functions as an enzyme, a transcription coregulator, and a chaperone in ammonium assimilation and in the regulation of genes involved in nitrogen metabolism. It catalyzes the ATP-dependent biosynthesis of glutamine from glutamate and ammonia. Feedback-inhibited GlnA also interacts with and regulates the activity of the transcriptional regulator TnrA. During nitrogen limitation, TnrA is in its DNA-binding active state and turns on the transcription of genes required for nitrogen assimilation. Under conditions of nitrogen excess, feedback-inhibited GlnA forms a stable complex with TnrA, which inhibits its DNA-binding activity. In contrast, feedback-inhibited GlnA acts as a chaperone to stabilize the DNA-binding activity of GlnR, which represses the transcription of nitrogen assimilation genes. The chain is Glutamine synthetase from Staphylococcus aureus (strain N315).